The sequence spans 95 residues: Translation initiation factor 1A (95 aa).

Residues 7 to 81 enclose the S1-like domain; sequence GRKNLRMPED…DKADVTWRYE (75 aa).

This sequence belongs to the eIF-1A family.

Its function is as follows. Seems to be required for maximal rate of protein biosynthesis. Enhances ribosome dissociation into subunits and stabilizes the binding of the initiator Met-tRNA(I) to 40 S ribosomal subunits. This is Translation initiation factor 1A (eIF1A) from Halobacterium salinarum (strain ATCC 29341 / DSM 671 / R1).